The sequence spans 530 residues: Phosphoenolpyruvate carboxykinase (ATP) (530 aa).

Residues Arg60, Tyr195, and Lys201 each contribute to the substrate site. Residues Lys201, His221, and 237 to 245 (GLSGTGKTT) each bind ATP. Positions 201 and 221 each coordinate Mn(2+). Asp258 is a binding site for Mn(2+). Positions 286, 324, and 449 each coordinate ATP. Residue Arg324 coordinates substrate.

The protein belongs to the phosphoenolpyruvate carboxykinase (ATP) family. Mn(2+) is required as a cofactor.

The protein resides in the cytoplasm. It catalyses the reaction oxaloacetate + ATP = phosphoenolpyruvate + ADP + CO2. The protein operates within carbohydrate biosynthesis; gluconeogenesis. Functionally, involved in the gluconeogenesis. Catalyzes the conversion of oxaloacetate (OAA) to phosphoenolpyruvate (PEP) through direct phosphoryl transfer between the nucleoside triphosphate and OAA. The protein is Phosphoenolpyruvate carboxykinase (ATP) of Geotalea uraniireducens (strain Rf4) (Geobacter uraniireducens).